The primary structure comprises 491 residues: Glutamyl-tRNA(Gln) amidotransferase subunit A (491 aa).

Residues Lys-76 and Ser-154 each act as charge relay system in the active site. Ser-178 serves as the catalytic Acyl-ester intermediate.

It belongs to the amidase family. GatA subfamily. As to quaternary structure, heterotrimer of A, B and C subunits.

It catalyses the reaction L-glutamyl-tRNA(Gln) + L-glutamine + ATP + H2O = L-glutaminyl-tRNA(Gln) + L-glutamate + ADP + phosphate + H(+). Allows the formation of correctly charged Gln-tRNA(Gln) through the transamidation of misacylated Glu-tRNA(Gln) in organisms which lack glutaminyl-tRNA synthetase. The reaction takes place in the presence of glutamine and ATP through an activated gamma-phospho-Glu-tRNA(Gln). This chain is Glutamyl-tRNA(Gln) amidotransferase subunit A, found in Cereibacter sphaeroides (strain ATCC 17029 / ATH 2.4.9) (Rhodobacter sphaeroides).